Here is a 72-residue protein sequence, read N- to C-terminus: U10-myrmicitoxin-Tb1a (72 aa).

Residues 1 to 26 (MRVSYLSLTLTIVVVIAIIYAPETEA) form the signal peptide. Positions 27-36 (KAWADADAEA) are excised as a propeptide.

Belongs to the formicidae venom precursor-01 superfamily. Expressed by the venom gland.

It localises to the secreted. Its function is as follows. In vivo, this neurotoxin paralyzes about 40% of blowflies (L.caesar) one hour after intrathoracic injection, when tested at high doses (28 nmol/g). This is U10-myrmicitoxin-Tb1a from Tetramorium bicarinatum (Tramp ant).